We begin with the raw amino-acid sequence, 165 residues long: Short form salivary protein D7R4 (165 aa).

An N-terminal signal peptide occupies residues 1 to 21; that stretch reads MIRQVITSYFLTVCLLALVQG. Disulfide bonds link cysteine 27/cysteine 59, cysteine 40/cysteine 165, and cysteine 98/cysteine 117. Noradrenaline is bound by residues glutamate 28 and arginine 43. A serotonin-binding site is contributed by glutamate 28. Histidine 56, tyrosine 115, aspartate 132, and glutamate 135 together coordinate serotonin. Histamine is bound by residues tyrosine 115, aspartate 132, and glutamate 135. Residues tyrosine 115, aspartate 132, and glutamate 135 each contribute to the tryptamine site. Positions 132 and 135 each coordinate noradrenaline.

The protein belongs to the PBP/GOBP family. As to expression, female saliva (at protein level). Female salivary gland. Not detected in female carcass without salivary glands. Not detected in male tissues.

The protein resides in the secreted. Modulates blood feeding of female mosquitoes on vertebrate species by binding and sequestering different mediators involved in the host response. Binds serotonin, noradrenaline, histamine and tryptamine. Inhibits histamine-, serotonin- and partially noradrenaline-induced smooth muscle contraction. Exhibits vasodilating activity. The chain is Short form salivary protein D7R4 from Anopheles gambiae (African malaria mosquito).